A 186-amino-acid chain; its full sequence is ATP synthase subunit delta (186 aa).

This sequence belongs to the ATPase delta chain family. F-type ATPases have 2 components, F(1) - the catalytic core - and F(0) - the membrane proton channel. F(1) has five subunits: alpha(3), beta(3), gamma(1), delta(1), epsilon(1). F(0) has three main subunits: a(1), b(2) and c(10-14). The alpha and beta chains form an alternating ring which encloses part of the gamma chain. F(1) is attached to F(0) by a central stalk formed by the gamma and epsilon chains, while a peripheral stalk is formed by the delta and b chains.

The protein resides in the cell inner membrane. Functionally, f(1)F(0) ATP synthase produces ATP from ADP in the presence of a proton or sodium gradient. F-type ATPases consist of two structural domains, F(1) containing the extramembraneous catalytic core and F(0) containing the membrane proton channel, linked together by a central stalk and a peripheral stalk. During catalysis, ATP synthesis in the catalytic domain of F(1) is coupled via a rotary mechanism of the central stalk subunits to proton translocation. In terms of biological role, this protein is part of the stalk that links CF(0) to CF(1). It either transmits conformational changes from CF(0) to CF(1) or is implicated in proton conduction. This is ATP synthase subunit delta from Bacteroides fragilis (strain ATCC 25285 / DSM 2151 / CCUG 4856 / JCM 11019 / LMG 10263 / NCTC 9343 / Onslow / VPI 2553 / EN-2).